A 266-amino-acid chain; its full sequence is Ribosomal RNA small subunit methyltransferase A (266 aa).

S-adenosyl-L-methionine contacts are provided by His13, Leu15, Gly40, Glu61, Asp85, and Asn104.

It belongs to the class I-like SAM-binding methyltransferase superfamily. rRNA adenine N(6)-methyltransferase family. RsmA subfamily.

It localises to the cytoplasm. It carries out the reaction adenosine(1518)/adenosine(1519) in 16S rRNA + 4 S-adenosyl-L-methionine = N(6)-dimethyladenosine(1518)/N(6)-dimethyladenosine(1519) in 16S rRNA + 4 S-adenosyl-L-homocysteine + 4 H(+). Its function is as follows. Specifically dimethylates two adjacent adenosines (A1518 and A1519) in the loop of a conserved hairpin near the 3'-end of 16S rRNA in the 30S particle. May play a critical role in biogenesis of 30S subunits. This is Ribosomal RNA small subunit methyltransferase A from Parabacteroides distasonis (strain ATCC 8503 / DSM 20701 / CIP 104284 / JCM 5825 / NCTC 11152).